A 91-amino-acid polypeptide reads, in one-letter code: Small ribosomal subunit protein uS15 (91 aa).

Belongs to the universal ribosomal protein uS15 family. In terms of assembly, part of the 30S ribosomal subunit. Forms a bridge to the 50S subunit in the 70S ribosome, contacting the 23S rRNA.

In terms of biological role, one of the primary rRNA binding proteins, it binds directly to 16S rRNA where it helps nucleate assembly of the platform of the 30S subunit by binding and bridging several RNA helices of the 16S rRNA. Forms an intersubunit bridge (bridge B4) with the 23S rRNA of the 50S subunit in the ribosome. In Rickettsia bellii (strain OSU 85-389), this protein is Small ribosomal subunit protein uS15.